Here is a 264-residue protein sequence, read N- to C-terminus: Hemin import ATP-binding protein HmuV (264 aa).

Positions 2–241 constitute an ABC transporter domain; sequence IEVSGVSVRL…ETMLAVFGCA (240 aa). 34 to 41 serves as a coordination point for ATP; sequence GPNGSGKT.

The protein belongs to the ABC transporter superfamily. Heme (hemin) importer (TC 3.A.1.14.5) family. In terms of assembly, the complex is composed of two ATP-binding proteins (HmuV), two transmembrane proteins (HmuU) and a solute-binding protein (HmuT).

It localises to the cell inner membrane. Part of the ABC transporter complex HmuTUV involved in hemin import. Responsible for energy coupling to the transport system. In Rhizobium johnstonii (strain DSM 114642 / LMG 32736 / 3841) (Rhizobium leguminosarum bv. viciae), this protein is Hemin import ATP-binding protein HmuV.